A 473-amino-acid polypeptide reads, in one-letter code: Ribulose bisphosphate carboxylase large chain (473 aa).

Lys-8 is subject to N6,N6,N6-trimethyllysine. Positions 117 and 167 each coordinate substrate. The active-site Proton acceptor is the Lys-169. Lys-171 is a binding site for substrate. Residues Lys-195, Asp-197, and Glu-198 each coordinate Mg(2+). Position 195 is an N6-carboxylysine (Lys-195). His-288 acts as the Proton acceptor in catalysis. Arg-289, His-321, and Ser-373 together coordinate substrate.

This sequence belongs to the RuBisCO large chain family. Type I subfamily. In terms of assembly, heterohexadecamer of 8 large chains and 8 small chains; disulfide-linked. The disulfide link is formed within the large subunit homodimers. Mg(2+) serves as cofactor. In terms of processing, the disulfide bond which can form in the large chain dimeric partners within the hexadecamer appears to be associated with oxidative stress and protein turnover.

It is found in the plastid. It localises to the chloroplast. The enzyme catalyses 2 (2R)-3-phosphoglycerate + 2 H(+) = D-ribulose 1,5-bisphosphate + CO2 + H2O. It catalyses the reaction D-ribulose 1,5-bisphosphate + O2 = 2-phosphoglycolate + (2R)-3-phosphoglycerate + 2 H(+). Functionally, ruBisCO catalyzes two reactions: the carboxylation of D-ribulose 1,5-bisphosphate, the primary event in carbon dioxide fixation, as well as the oxidative fragmentation of the pentose substrate in the photorespiration process. Both reactions occur simultaneously and in competition at the same active site. In Amorphophallus titanum (Titan arum), this protein is Ribulose bisphosphate carboxylase large chain.